The sequence spans 232 residues: Sugar fermentation stimulation protein homolog (232 aa).

The protein belongs to the SfsA family.

In Moorella thermoacetica (strain ATCC 39073 / JCM 9320), this protein is Sugar fermentation stimulation protein homolog.